The sequence spans 254 residues: 3-deoxy-manno-octulosonate cytidylyltransferase (254 aa).

The protein belongs to the KdsB family.

Its subcellular location is the cytoplasm. The catalysed reaction is 3-deoxy-alpha-D-manno-oct-2-ulosonate + CTP = CMP-3-deoxy-beta-D-manno-octulosonate + diphosphate. Its pathway is nucleotide-sugar biosynthesis; CMP-3-deoxy-D-manno-octulosonate biosynthesis; CMP-3-deoxy-D-manno-octulosonate from 3-deoxy-D-manno-octulosonate and CTP: step 1/1. The protein operates within bacterial outer membrane biogenesis; lipopolysaccharide biosynthesis. Functionally, activates KDO (a required 8-carbon sugar) for incorporation into bacterial lipopolysaccharide in Gram-negative bacteria. The polypeptide is 3-deoxy-manno-octulosonate cytidylyltransferase (Chlamydia felis (strain Fe/C-56) (Chlamydophila felis)).